The chain runs to 488 residues: Inosine-5'-monophosphate dehydrogenase (488 aa).

CBS domains follow at residues 95 to 153 (VITN…SIKI) and 157 to 213 (MTKE…PHAA). Residues Asp250 and 300–302 (GIG) each bind NAD(+). 2 residues coordinate K(+): Gly302 and Gly304. Ser305 lines the IMP pocket. Cys307 lines the K(+) pocket. Catalysis depends on Cys307, which acts as the Thioimidate intermediate. Residues 340 to 342 (DGG), 363 to 364 (GS), and 387 to 391 (YRGMG) contribute to the IMP site. The Proton acceptor role is filled by Arg403. Glu417 provides a ligand contact to IMP. Residues 467 to 488 (AGLAESHPHNVQITKESPNYSF) are disordered. The K(+) site is built by Glu471, Ser472, and His473. Positions 475–488 (HNVQITKESPNYSF) are enriched in polar residues.

The protein belongs to the IMPDH/GMPR family. Homotetramer. K(+) serves as cofactor.

The enzyme catalyses IMP + NAD(+) + H2O = XMP + NADH + H(+). It functions in the pathway purine metabolism; XMP biosynthesis via de novo pathway; XMP from IMP: step 1/1. Its activity is regulated as follows. Mycophenolic acid (MPA) is a non-competitive inhibitor that prevents formation of the closed enzyme conformation by binding to the same site as the amobile flap. In contrast, mizoribine monophosphate (MZP) is a competitive inhibitor that induces the closed conformation. MPA is a potent inhibitor of mammalian IMPDHs but a poor inhibitor of the bacterial enzymes. MZP is a more potent inhibitor of bacterial IMPDH. Functionally, catalyzes the conversion of inosine 5'-phosphate (IMP) to xanthosine 5'-phosphate (XMP), the first committed and rate-limiting step in the de novo synthesis of guanine nucleotides, and therefore plays an important role in the regulation of cell growth. This chain is Inosine-5'-monophosphate dehydrogenase, found in Staphylococcus haemolyticus (strain JCSC1435).